The chain runs to 1476 residues: Membrane-associated guanylate kinase, WW and PDZ domain-containing protein 3 (1476 aa).

A PDZ 1 domain is found at 18 to 108 (CAVSWAGPPG…PIRLKTVKPG (91 aa)). An interaction with ADRB1 and TGFA region spans residues 18–108 (CAVSWAGPPG…PIRLKTVKPG (91 aa)). Positions 116-290 (RHYLSLQFQK…SSMDFRNYMM (175 aa)) constitute a Guanylate kinase-like domain. Residue 123-130 (FQKGSIDH) coordinates ATP. Residues 184 to 266 (TYDGNFYGTP…ETREMHSETS (83 aa)) are disordered. Pro residues predominate over residues 193–204 (PKPPAEPSPFQP). Ser-236 carries the phosphoserine modification. A compositionally biased stretch (acidic residues) spans 238 to 247 (LPEEEEDEDK). WW domains lie at 296–329 (EPLP…DPRL) and 342–375 (GELP…NPVE). Residues 413 to 495 (RASLKKSTMG…NQYVNLTLCR (83 aa)) form the PDZ 2 domain. The interaction with PTEN stretch occupies residues 413-495 (RASLKKSTMG…NQYVNLTLCR (83 aa)). The interval 551–575 (LASDRLNGPSESSEQRASLASSGSS) is disordered. Residues 559-575 (PSESSEQRASLASSGSS) show a composition bias toward polar residues. The PDZ 3 domain maps to 581–657 (TIPLIKGPKG…GADVPLLILR (77 aa)). Ser-598 bears the Phosphoserine mark. The disordered stretch occupies residues 664 to 691 (TKTAKTKTDTKENSGSLETINEPIPQPM). Ser-702 bears the Phosphoserine mark. The PDZ 4 domain maps to 729–811 (DVFLRKQESG…NGHVLLTVRR (83 aa)). The tract at residues 729 to 811 (DVFLRKQESG…NGHVLLTVRR (83 aa)) is interaction with ADGRB1. The segment at 818-844 (KQPEDESHQAFSQNGSPRLNRAELPTR) is disordered. Phosphoserine is present on residues Ser-833 and Ser-916. In terms of domain architecture, PDZ 5 spans 852–939 (DVTLQRKENE…TVTLTVVAEE (88 aa)). Residues 852–939 (DVTLQRKENE…TVTLTVVAEE (88 aa)) are interaction with LPAR2 and GRIN2B. Residues 939 to 966 (EEHHGPPSGTNSARQSPALQHRPMGQAQ) form a disordered region. A compositionally biased stretch (polar residues) spans 946–956 (SGTNSARQSPA). The 83-residue stretch at 1022-1104 (PVELERGPRG…KVLLLLRPGT (83 aa)) folds into the PDZ 6 domain. Disordered regions lie at residues 1109-1151 (DHGD…ATED) and 1168-1476 (TVQE…DKQL). Residues 1114-1123 (DTNSPSSSNV) show a composition bias toward polar residues. Basic and acidic residues-rich tracts occupy residues 1193–1211 (SKKD…RLKG) and 1230–1265 (RHSE…ESKG). Polar residues predominate over residues 1285 to 1304 (SSSPKKQQKIGGNSLSNTEG). Composition is skewed to basic and acidic residues over residues 1317-1340 (HPRD…KDLK) and 1350-1361 (KSPEKKSSKVDE). Ser-1321 carries the post-translational modification Phosphoserine. Residues 1363-1373 (SLPSKKTSSTA) show a composition bias toward polar residues. The span at 1419–1437 (ADDHKGRESEVTDRCRERA) shows a compositional bias: basic and acidic residues.

The protein belongs to the MAGUK family. In terms of assembly, interacts with ADRB1, ADGRB1, LPAR2/EDG4, GRIN2B, PTEN, and PTPRB. Interacts with unidentified tyrosine phosphorylated proteins. Interacts with FZD4, FZD7, TGFA and VANGL2. Interacts with DLL1. Interacts with PRRG4 (via cytoplasmic domain). Widely expressed. Colocalizes with TGFA in neurons in the cortex and dentate gyrus, as well as in ependymal cells and some astrocytes (at protein level). Present in lens epithelium.

The protein resides in the cell membrane. The protein localises to the cell junction. It is found in the tight junction. It localises to the nucleus. Functionally, acts as a scaffolding protein at cell-cell junctions, thereby regulating various cellular and signaling processes. Cooperates with PTEN to modulate the kinase activity of AKT1. Its interaction with PTPRB and tyrosine phosphorylated proteins suggests that it may link receptor tyrosine phosphatase with its substrates at the plasma membrane. In polarized epithelial cells, involved in efficient trafficking of TGFA to the cell surface. Regulates the ability of LPAR2 to activate ERK and RhoA pathways. Regulates the JNK signaling cascade via its interaction with FZD4 and VANGL2. The chain is Membrane-associated guanylate kinase, WW and PDZ domain-containing protein 3 (Magi3) from Mus musculus (Mouse).